We begin with the raw amino-acid sequence, 902 residues long: Glutamate receptor 4 (902 aa).

The N-terminal stretch at 1–20 (MRIICRQIVLLFSGFWGLAM) is a signal peptide. Over 22-544 (AFPSSVQIGG…GVFSFLDPLA (523 aa)) the chain is Extracellular. 6 N-linked (GlcNAc...) asparagine glycosylation sites follow: Asn52, Asn56, Asn258, Asn371, Asn407, and Asn414. Cys84 and Cys331 are joined by a disulfide. The L-glutamate site is built by Pro500, Thr502, and Arg507. The helical transmembrane segment at 545-565 (YEIWMCIVFAYIGVSVVLFLV) threads the bilayer. Residues 566–592 (SRFSPYEWHTEEPEDGKEGPSDQPPNE) lie on the Cytoplasmic side of the membrane. The helical; Pore-forming intramembrane region spans 593-608 (FGIFNSLWFSLGAFMQ). The stretch at 609–611 (QGC) is an intramembrane region. Cys611 carries the S-palmitoyl cysteine lipid modification. Residues 612–617 (DISPRS) lie on the Cytoplasmic side of the membrane. The helical transmembrane segment at 618–638 (LSGRIVGGVWWFFTLIIISSY) threads the bilayer. Residues 639–813 (TANLAAFLTV…DKTSALSLSN (175 aa)) are Extracellular-facing. Residues Ser676, Thr677, and Glu727 each contribute to the L-glutamate site. A disulfide bridge connects residues Cys740 and Cys795. Residues 814–834 (VAGVFYILVGGLGLAMLVALI) form a helical membrane-spanning segment. At 835-902 (EFCYKSRAEA…GLAVIASDLP (68 aa)) the chain is on the cytoplasmic side. Cys837 carries S-palmitoyl cysteine lipidation. At Ser862 the chain carries Phosphoserine; by PKC/PRKCG.

The protein belongs to the glutamate-gated ion channel (TC 1.A.10.1) family. GRIA4 subfamily. In terms of assembly, homotetramer or heterotetramer of pore-forming glutamate receptor subunits. Tetramers may be formed by the dimerization of dimers. Interacts with EPB41L1 via its C-terminus. Isoform 3 interacts with PICK1. Found in a complex with GRIA1, GRIA2, GRIA3, CNIH2, CNIH3, CACNG2, CACNG3, CACNG4, CACNG5, CACNG7 and CACNG8. Interacts with CACNG5 and PRKCG. Found in a complex with GRIA1, GRIA2, GRIA3, DLG4, CACNG8 and CNIH2. Palmitoylated. Depalmitoylated upon L-glutamate stimulation. ZDHHC3/GODZ specifically palmitoylates Cys-611, which leads to Golgi retention and decreased cell surface expression. In contrast, Cys-837 palmitoylation does not affect cell surface expression but regulates stimulation-dependent endocytosis. Post-translationally, phosphorylated at Ser-862 by PRKCG; phosphorylation increases plasma membrane-associated GRI4 expression. In terms of tissue distribution, detected in cerebellum.

The protein resides in the cell membrane. It localises to the postsynaptic cell membrane. The protein localises to the cell projection. It is found in the dendrite. It carries out the reaction Ca(2+)(in) = Ca(2+)(out). The enzyme catalyses Na(+)(in) = Na(+)(out). It catalyses the reaction Mg(2+)(in) = Mg(2+)(out). In terms of biological role, ionotropic glutamate receptor that functions as a ligand-gated cation channel, gated by L-glutamate and glutamatergic agonists such as alpha-amino-3-hydroxy-5-methyl-4-isoxazolepropionic acid (AMPA), quisqualic acid, and kainic acid. L-glutamate acts as an excitatory neurotransmitter at many synapses in the central nervous system and plays an important role in fast excitatory synaptic transmission. Binding of the excitatory neurotransmitter L-glutamate induces a conformation change, leading to the opening of the cation channel, and thereby converts the chemical signal to an electrical impulse upon entry of monovalent and divalent cations such as sodium and calcium. The receptor then desensitizes rapidly and enters a transient inactive state, characterized by the presence of bound agonist. In the presence of CACNG8, shows resensitization which is characterized by a delayed accumulation of current flux upon continued application of L-glutamate. This chain is Glutamate receptor 4, found in Rattus norvegicus (Rat).